Reading from the N-terminus, the 151-residue chain is 3-hydroxyacyl-[acyl-carrier-protein] dehydratase FabZ (151 aa).

His-54 is an active-site residue.

This sequence belongs to the thioester dehydratase family. FabZ subfamily. As to quaternary structure, oligomer. In terms of processing, the N-terminus is blocked.

The protein resides in the cytoplasm. The catalysed reaction is a (3R)-hydroxyacyl-[ACP] = a (2E)-enoyl-[ACP] + H2O. Its function is as follows. Involved in unsaturated fatty acids biosynthesis. Catalyzes the dehydration of short chain beta-hydroxyacyl-ACPs and long chain saturated and unsaturated beta-hydroxyacyl-ACPs. The polypeptide is 3-hydroxyacyl-[acyl-carrier-protein] dehydratase FabZ (Escherichia coli (strain SE11)).